A 383-amino-acid chain; its full sequence is Trichodiene synthase (383 aa).

This sequence belongs to the trichodiene synthase family.

It carries out the reaction (2E,6E)-farnesyl diphosphate = trichodiene + diphosphate. It functions in the pathway sesquiterpene biosynthesis; trichothecene biosynthesis. Functionally, TS is a member of the terpene cyclase group of enzymes. It catalyzes the isomerization and cyclization of farnesyl pyro-phosphate to form trichodiene, the first cyclic intermediate in the biosynthetic pathway for trichothecenes. It serves to branch trichothecene biosynthesis from the isoprenoid pathway. This chain is Trichodiene synthase (TRI5), found in Stachybotrys chartarum (Toxic black mold).